A 191-amino-acid chain; its full sequence is Phosphoheptose isomerase (191 aa).

An SIS domain is found at 37–191; that stretch reads IAESFKQDGK…IIQLIEKEME (155 aa). 52-54 is a binding site for substrate; it reads NGG. The Zn(2+) site is built by H61 and E65. Substrate is bound by residues E65, 93–94, 119–121, S124, and Q172; these read ND and STS. Residues Q172 and H180 each coordinate Zn(2+).

It belongs to the SIS family. GmhA subfamily. Homotetramer. Requires Zn(2+) as cofactor.

It is found in the cytoplasm. The catalysed reaction is 2 D-sedoheptulose 7-phosphate = D-glycero-alpha-D-manno-heptose 7-phosphate + D-glycero-beta-D-manno-heptose 7-phosphate. It participates in carbohydrate biosynthesis; D-glycero-D-manno-heptose 7-phosphate biosynthesis; D-glycero-alpha-D-manno-heptose 7-phosphate and D-glycero-beta-D-manno-heptose 7-phosphate from sedoheptulose 7-phosphate: step 1/1. It functions in the pathway bacterial outer membrane biogenesis; LPS core biosynthesis. Functionally, catalyzes the isomerization of sedoheptulose 7-phosphate in D-glycero-D-manno-heptose 7-phosphate. The protein is Phosphoheptose isomerase of Vibrio vulnificus (strain CMCP6).